Consider the following 144-residue polypeptide: Large ribosomal subunit protein uL15 (144 aa).

The tract at residues 1 to 49 (MRLNTLSPAAGSKSAPKRVGRGIGSGLGKTAGRGHKGQKSRSGGGVRVG) is disordered. The segment covering 21 to 31 (RGIGSGLGKTA) has biased composition (gly residues).

Belongs to the universal ribosomal protein uL15 family. As to quaternary structure, part of the 50S ribosomal subunit.

Its function is as follows. Binds to the 23S rRNA. The protein is Large ribosomal subunit protein uL15 of Shewanella denitrificans (strain OS217 / ATCC BAA-1090 / DSM 15013).